The following is a 351-amino-acid chain: Minor outer capsid protein P9 (351 aa).

Residues 246-330 form a disordered region; sequence GVPAALPQPD…EMDMPDGFHD (85 aa). The segment covering 285–298 has biased composition (basic and acidic residues); that stretch reads MIRKKVETSKDAPS. The segment covering 315–324 has biased composition (acidic residues); it reads LEDDMSEMDM.

It belongs to the phytoreovirus minor outer capsid protein P9 family.

The protein resides in the virion. Its subcellular location is the host cytoplasm. Functionally, minor outer capsid protein. In Alopecurus aequalis (Barnyard grass), this protein is Minor outer capsid protein P9.